Here is a 523-residue protein sequence, read N- to C-terminus: MFSEVKVLQIVLVQWLTLFSFTYNSHGTYILDGSAVFNENSYLVLTNTTKHSYGQAFDNTTFEMKDQSFSINFFFAIVPEHKQQGSHGMTFAFSPTRGLPGASSDQYLGLFNKTNNGKTSNHVIAIELDIHKDEEFEDIDDNHVGININGLRSVASASAGYYDDNDGSFKNLSLISGKLMRLSIVYSHPDTKLDVTLCPAEFLVPPRKPLLSLNRDLSQYVLKHMHIGFTASTGSIRALHYMVLVYTYPEAVYQPLEFGRVPTLPPYPKKPSDRLRTVLAVCLTLALFAVFLASGIGFVFYLRHKKVKEVLEEWEIQCGPHRFSYKELFNATKGFKEKQLLGKGGFGQVYKGTLPGSDAEIAVKRTSHDSRQGMSEFLAEISTIGRLRHPNLVRLLGYCKHKENLYLVYDFMPNGSLDKYLNRSNTNENQERLTWEQRFKIIKDVASALLHLHQEWVQVIIHRDIKPANVLIDHDMNARLGDFGLAKLYDQGFDPQTSRVAGTFGYIAPEFLRTGRAVRVKFF.

Residues 1–27 (MFSEVKVLQIVLVQWLTLFSFTYNSHG) form the signal peptide. Residues 28–242 (TYILDGSAVF…TGSIRALHYM (215 aa)) are legume-lectin like. Over 28 to 279 (TYILDGSAVF…KPSDRLRTVL (252 aa)) the chain is Extracellular. N-linked (GlcNAc...) asparagine glycans are attached at residues Asn-47, Asn-59, Asn-112, and Asn-171. A helical membrane pass occupies residues 280–300 (AVCLTLALFAVFLASGIGFVF). The Cytoplasmic segment spans residues 301–523 (YLRHKKVKEV…TGRAVRVKFF (223 aa)). The Protein kinase domain maps to 335 to 523 (FKEKQLLGKG…TGRAVRVKFF (189 aa)). ATP contacts are provided by residues 341-349 (LGKGGFGQV) and Lys-364. The active-site Proton acceptor is the Asp-464.

In the C-terminal section; belongs to the protein kinase superfamily. Ser/Thr protein kinase family. The protein in the N-terminal section; belongs to the leguminous lectin family.

The protein localises to the cell membrane. It catalyses the reaction L-seryl-[protein] + ATP = O-phospho-L-seryl-[protein] + ADP + H(+). It carries out the reaction L-threonyl-[protein] + ATP = O-phospho-L-threonyl-[protein] + ADP + H(+). The polypeptide is Putative L-type lectin-domain containing receptor kinase V.6 (LECRK56) (Arabidopsis thaliana (Mouse-ear cress)).